The chain runs to 249 residues: Methyl-coenzyme M reductase subunit gamma (249 aa).

The tract at residues 43 to 62 (RAPGEEYPSVHPPLEELDEP) is disordered. A coenzyme M-binding site is contributed by arginine 120.

It belongs to the methyl-coenzyme M reductase gamma subunit family. MCR is a hexamer of two alpha, two beta, and two gamma chains, forming a dimer of heterotrimers. Coenzyme F430 is required as a cofactor.

It is found in the cytoplasm. The enzyme catalyses coenzyme B + methyl-coenzyme M = methane + coenzyme M-coenzyme B heterodisulfide. It participates in one-carbon metabolism; methyl-coenzyme M reduction; methane from methyl-coenzyme M: step 1/1. Component of the methyl-coenzyme M reductase (MCR) I that catalyzes the reductive cleavage of methyl-coenzyme M (CoM-S-CH3 or 2-(methylthio)ethanesulfonate) using coenzyme B (CoB or 7-mercaptoheptanoylthreonine phosphate) as reductant which results in the production of methane and the mixed heterodisulfide of CoB and CoM (CoM-S-S-CoB). This is the final step in methanogenesis. This Methanothermus fervidus protein is Methyl-coenzyme M reductase subunit gamma (mcrG).